We begin with the raw amino-acid sequence, 90 residues long: UPF0297 protein BH1268 (90 aa).

This sequence belongs to the UPF0297 family.

The sequence is that of UPF0297 protein BH1268 from Halalkalibacterium halodurans (strain ATCC BAA-125 / DSM 18197 / FERM 7344 / JCM 9153 / C-125) (Bacillus halodurans).